A 187-amino-acid polypeptide reads, in one-letter code: ATP synthase subunit b (187 aa).

The helical transmembrane segment at 4 to 24 threads the bilayer; it reads LALFALLMVPAILLASGHDSG.

It belongs to the ATPase B chain family. F-type ATPases have 2 components, F(1) - the catalytic core - and F(0) - the membrane proton channel. F(1) has five subunits: alpha(3), beta(3), gamma(1), delta(1), epsilon(1). F(0) has three main subunits: a(1), b(2) and c(10-14). The alpha and beta chains form an alternating ring which encloses part of the gamma chain. F(1) is attached to F(0) by a central stalk formed by the gamma and epsilon chains, while a peripheral stalk is formed by the delta and b chains.

The protein localises to the cell inner membrane. In terms of biological role, f(1)F(0) ATP synthase produces ATP from ADP in the presence of a proton or sodium gradient. F-type ATPases consist of two structural domains, F(1) containing the extramembraneous catalytic core and F(0) containing the membrane proton channel, linked together by a central stalk and a peripheral stalk. During catalysis, ATP synthesis in the catalytic domain of F(1) is coupled via a rotary mechanism of the central stalk subunits to proton translocation. Functionally, component of the F(0) channel, it forms part of the peripheral stalk, linking F(1) to F(0). This chain is ATP synthase subunit b, found in Sulfurovum sp. (strain NBC37-1).